We begin with the raw amino-acid sequence, 773 residues long: ATP-dependent permease MDL2, mitochondrial (773 aa).

A mitochondrion-targeting transit peptide spans 1 to 90; sequence MLNGRLPLLR…SPISKGSARS (90 aa). Residues 73 to 84 are compositionally biased toward polar residues; sequence PETSLPSASPIS. The tract at residues 73 to 95 is disordered; that stretch reads PETSLPSASPISKGSARSAHAKE. The region spanning 119–413 is the ABC transmembrane type-1 domain; sequence LLTAILLLTI…LSTFYSEIMQ (295 aa). 3 helical membrane-spanning segments follow: residues 123–143, 170–192, and 257–277; these read ILLLTISCSIGMSIPKVIGIV, FLSFFTVALLIGCAANFGRFILL, and VVGVGMMCSLSPQLSILLLFF. Residue 481–488 coordinates ATP; that stretch reads GPSGRGKS. The ABC transporter domain occupies 493–733; sequence LLLRYYNPTT…DDNDNNHDND (241 aa). Basic and acidic residues-rich tracts occupy residues 706-733 and 740-762; these read KEDLNESKEHDDQKKDDNDDNDNNHDND and ETKDNNSDDIEKSVEHLLKDAAK. The tract at residues 706 to 773 is disordered; the sequence is KEDLNESKEH…ANPIKITPQP (68 aa).

It belongs to the ABC transporter superfamily. ABCB family. Mitochondrial peptide exporter (TC 3.A.1.212) subfamily.

Its subcellular location is the mitochondrion inner membrane. The protein is ATP-dependent permease MDL2, mitochondrial (MDL2) of Saccharomyces cerevisiae (strain ATCC 204508 / S288c) (Baker's yeast).